The sequence spans 205 residues: MITSIFGKVTFVGKRKIIVEHNWISYWFNTKENHKFEKNLEKNKQIFCHIIKKIVANQIIEEAFAFNTLEEKEWFCRLIELNGIGSKTALNLLNNDLEEIKQYILENNYSALCGINGVNNKIARALLSLEIFEKSENNKNIKGVQVADGYDELFETLKSLGYKQQEIQDALKMIEVKPDFDISQLVAEVIKLMSFKNNEITNKTA.

Positions 1–67 (MITSIFGKVT…QIIEEAFAFN (67 aa)) are domain I. Residues 68 to 146 (TLEEKEWFCR…NNKNIKGVQV (79 aa)) are domain II. The tract at residues 147–150 (ADGY) is flexible linker. The domain III stretch occupies residues 150–205 (YDELFETLKSLGYKQQEIQDALKMIEVKPDFDISQLVAEVIKLMSFKNNEITNKTA).

It belongs to the RuvA family. As to quaternary structure, homotetramer. Forms an RuvA(8)-RuvB(12)-Holliday junction (HJ) complex. HJ DNA is sandwiched between 2 RuvA tetramers; dsDNA enters through RuvA and exits via RuvB. An RuvB hexamer assembles on each DNA strand where it exits the tetramer. Each RuvB hexamer is contacted by two RuvA subunits (via domain III) on 2 adjacent RuvB subunits; this complex drives branch migration. In the full resolvosome a probable DNA-RuvA(4)-RuvB(12)-RuvC(2) complex forms which resolves the HJ.

It is found in the cytoplasm. Functionally, the RuvA-RuvB-RuvC complex processes Holliday junction (HJ) DNA during genetic recombination and DNA repair, while the RuvA-RuvB complex plays an important role in the rescue of blocked DNA replication forks via replication fork reversal (RFR). RuvA specifically binds to HJ cruciform DNA, conferring on it an open structure. The RuvB hexamer acts as an ATP-dependent pump, pulling dsDNA into and through the RuvAB complex. HJ branch migration allows RuvC to scan DNA until it finds its consensus sequence, where it cleaves and resolves the cruciform DNA. The polypeptide is Holliday junction branch migration complex subunit RuvA (Mycoplasma genitalium (strain ATCC 33530 / DSM 19775 / NCTC 10195 / G37) (Mycoplasmoides genitalium)).